We begin with the raw amino-acid sequence, 262 residues long: Carbonic anhydrase 13 (262 aa).

The region spanning Leu-4 to Phe-261 is the Alpha-carbonic anhydrase domain. Catalysis depends on His-65, which acts as the Proton donor/acceptor. The Zn(2+) site is built by His-95, His-97, and His-120. Thr-200–Val-201 lines the substrate pocket.

The protein belongs to the alpha-carbonic anhydrase family. Requires Zn(2+) as cofactor. As to expression, expressed in thymus, small intestine, spleen, prostate, ovary, colon and testis.

It carries out the reaction hydrogencarbonate + H(+) = CO2 + H2O. Inhibited by acetazolamide. Its function is as follows. Reversible hydration of carbon dioxide. The protein is Carbonic anhydrase 13 (CA13) of Homo sapiens (Human).